The sequence spans 198 residues: Prostamide/prostaglandin F synthase (198 aa).

The residue at position 108 (Tyr108) is a Phosphotyrosine.

Belongs to the peroxiredoxin-like PRXL2 family. Prostamide/prostaglandin F synthase subfamily.

Its subcellular location is the cytoplasm. It is found in the cytosol. It carries out the reaction prostaglandin H2 + [thioredoxin]-dithiol = prostaglandin F2alpha + [thioredoxin]-disulfide. It catalyses the reaction prostamide F2alpha + [thioredoxin]-disulfide = prostamide H2 + [thioredoxin]-dithiol. In terms of biological role, catalyzes the reduction of prostaglandin-ethanolamide H(2) (prostamide H(2)) to prostamide F(2alpha) with NADPH as proton donor. Also able to reduce prostaglandin H(2) to prostaglandin F(2alpha). The chain is Prostamide/prostaglandin F synthase from Homo sapiens (Human).